The chain runs to 241 residues: 1-(5-phosphoribosyl)-5-[(5-phosphoribosylamino)methylideneamino] imidazole-4-carboxamide isomerase (241 aa).

Asp-10 functions as the Proton acceptor in the catalytic mechanism. Asp-131 functions as the Proton donor in the catalytic mechanism.

Belongs to the HisA/HisF family.

It is found in the cytoplasm. It catalyses the reaction 1-(5-phospho-beta-D-ribosyl)-5-[(5-phospho-beta-D-ribosylamino)methylideneamino]imidazole-4-carboxamide = 5-[(5-phospho-1-deoxy-D-ribulos-1-ylimino)methylamino]-1-(5-phospho-beta-D-ribosyl)imidazole-4-carboxamide. The protein operates within amino-acid biosynthesis; L-histidine biosynthesis; L-histidine from 5-phospho-alpha-D-ribose 1-diphosphate: step 4/9. This is 1-(5-phosphoribosyl)-5-[(5-phosphoribosylamino)methylideneamino] imidazole-4-carboxamide isomerase from Bifidobacterium longum subsp. infantis (strain ATCC 15697 / DSM 20088 / JCM 1222 / NCTC 11817 / S12).